The primary structure comprises 466 residues: UPF0652 protein C16A11.03c (466 aa).

The protein belongs to the UPF0652 family.

It localises to the cytoplasm. Its subcellular location is the nucleus. The chain is UPF0652 protein C16A11.03c from Schizosaccharomyces pombe (strain 972 / ATCC 24843) (Fission yeast).